Reading from the N-terminus, the 65-residue chain is Conopeptide Vt3.2 (65 aa).

Positions 1-12 (LLFPLATLQLNA) are cleaved as a signal peptide. A propeptide spanning residues 13 to 48 (DQPVERNAENIQDLNPDKRFIFMPVPRRRGPYGSVH) is cleaved from the precursor. Ser-64 is modified (serine amide).

This sequence belongs to the conotoxin M superfamily. Homodimer; disulfide-linked. Expressed by the venom duct.

It localises to the secreted. The sequence is that of Conopeptide Vt3.2 from Conus planorbis (Planorbis cone).